We begin with the raw amino-acid sequence, 357 residues long: UDP-N-acetylglucosamine--N-acetylmuramyl-(pentapeptide) pyrophosphoryl-undecaprenol N-acetylglucosamine transferase (357 aa).

Residues Arg-166, Ser-196, and Gln-290 each coordinate UDP-N-acetyl-alpha-D-glucosamine.

It belongs to the glycosyltransferase 28 family. MurG subfamily.

The protein localises to the cell membrane. It catalyses the reaction Mur2Ac(oyl-L-Ala-gamma-D-Glu-L-Lys-D-Ala-D-Ala)-di-trans,octa-cis-undecaprenyl diphosphate + UDP-N-acetyl-alpha-D-glucosamine = beta-D-GlcNAc-(1-&gt;4)-Mur2Ac(oyl-L-Ala-gamma-D-Glu-L-Lys-D-Ala-D-Ala)-di-trans,octa-cis-undecaprenyl diphosphate + UDP + H(+). Its pathway is cell wall biogenesis; peptidoglycan biosynthesis. Functionally, cell wall formation. Catalyzes the transfer of a GlcNAc subunit on undecaprenyl-pyrophosphoryl-MurNAc-pentapeptide (lipid intermediate I) to form undecaprenyl-pyrophosphoryl-MurNAc-(pentapeptide)GlcNAc (lipid intermediate II). The sequence is that of UDP-N-acetylglucosamine--N-acetylmuramyl-(pentapeptide) pyrophosphoryl-undecaprenol N-acetylglucosamine transferase from Staphylococcus epidermidis (strain ATCC 35984 / DSM 28319 / BCRC 17069 / CCUG 31568 / BM 3577 / RP62A).